A 388-amino-acid chain; its full sequence is Probable aspartic-type endopeptidase MCYG_06955 (388 aa).

The N-terminal stretch at 1-21 is a signal peptide; the sequence is MMGPFFYFTAYVSLLFAFTQA. 2 N-linked (GlcNAc...) asparagine glycosylation sites follow: N82 and N104. The Peptidase A1 domain occupies 96 to 384; sequence FVNEITVGND…DYDGPKIGFA (289 aa). Residue D112 is part of the active site. N209 and N261 each carry an N-linked (GlcNAc...) asparagine glycan. D278 is a catalytic residue. 2 N-linked (GlcNAc...) asparagine glycosylation sites follow: N315 and N320.

This sequence belongs to the peptidase A1 family.

The protein resides in the secreted. Functionally, probable aspartic-type endopeptidase which contributes to virulence. This Arthroderma otae (strain ATCC MYA-4605 / CBS 113480) (Microsporum canis) protein is Probable aspartic-type endopeptidase MCYG_06955.